We begin with the raw amino-acid sequence, 231 residues long: Large ribosomal subunit protein uL1 (231 aa).

It belongs to the universal ribosomal protein uL1 family. As to quaternary structure, part of the 50S ribosomal subunit.

Functionally, binds directly to 23S rRNA. The L1 stalk is quite mobile in the ribosome, and is involved in E site tRNA release. Its function is as follows. Protein L1 is also a translational repressor protein, it controls the translation of the L11 operon by binding to its mRNA. This is Large ribosomal subunit protein uL1 from Lactobacillus delbrueckii subsp. bulgaricus (strain ATCC 11842 / DSM 20081 / BCRC 10696 / JCM 1002 / NBRC 13953 / NCIMB 11778 / NCTC 12712 / WDCM 00102 / Lb 14).